Here is a 253-residue protein sequence, read N- to C-terminus: VTSITLDLVNPTAGQYSSFVDKIRNNVKDPNLKYGGTDIAVIGPPSKEKFLRINFQSSRGTVSLGLKRDNLYVVAYLAMDNTNVNRAYYFRSEITSAELTALFPEATTANQKALEYTEDYQSIEKNAQITQGDKSRKELGLGIDLLLTSMEAVNKKARVVKNEARFLLIAIQMTAEAARFRYIQNLVIKNFPNKFNSENKVIQFEVNWKKISTAIYGDAKNGVFNKDYDFGFGKVRQVKDLQMGLLMYLGKPK.

Residue glutamate 176 is part of the active site.

The protein belongs to the ribosome-inactivating protein family. Type 1 RIP subfamily.

The catalysed reaction is Endohydrolysis of the N-glycosidic bond at one specific adenosine on the 28S rRNA.. Functionally, ribosome-inactivating protein of type 1, inhibits protein synthesis in animal cells. The polypeptide is Ribosome-inactivating protein saporin-7 (SAP7) (Saponaria officinalis (Common soapwort)).